The chain runs to 114 residues: Fatty acid-binding protein, liver (114 aa).

This sequence belongs to the calycin superfamily. Fatty-acid binding protein (FABP) family. In terms of processing, the N-terminus is blocked.

The protein resides in the cytoplasm. Its function is as follows. FABPs are thought to play a role in the intracellular transport of long-chain fatty acids and their acyl-CoA esters. The protein is Fatty acid-binding protein, liver of Lethenteron camtschaticum (Japanese lamprey).